Consider the following 413-residue polypeptide: Na(+)-translocating NADH-quinone reductase subunit B (413 aa).

A run of 3 helical transmembrane segments spans residues 55 to 75 (IMIMVWFAVFPAMFWGMYNAG), 128 to 148 (FLPIYATVFIVGGFWEVLFCM), and 163 to 183 (ILFALIVPPTLPLWQAALGIT). The residue at position 235 (Thr235) is an FMN phosphoryl threonine. The next 5 membrane-spanning stretches (helical) occupy residues 267-287 (IPGSIGEVSTLALMIGAAMIV), 296-316 (IIAGVMIGMIAVSTLFNVIGS), 324-344 (MPWHWHLVLGGFAFGMFFMAT), 357-377 (WWYGILIGAMCVMIRVVNPAY), and 380-400 (GMMLAILFANLFAPLFDHVVI).

The protein belongs to the NqrB/RnfD family. Composed of six subunits; NqrA, NqrB, NqrC, NqrD, NqrE and NqrF. FMN is required as a cofactor.

It localises to the cell inner membrane. It catalyses the reaction a ubiquinone + n Na(+)(in) + NADH + H(+) = a ubiquinol + n Na(+)(out) + NAD(+). NQR complex catalyzes the reduction of ubiquinone-1 to ubiquinol by two successive reactions, coupled with the transport of Na(+) ions from the cytoplasm to the periplasm. NqrA to NqrE are probably involved in the second step, the conversion of ubisemiquinone to ubiquinol. This Vibrio campbellii (strain ATCC BAA-1116) protein is Na(+)-translocating NADH-quinone reductase subunit B.